The chain runs to 214 residues: RNA pyrophosphohydrolase (214 aa).

In terms of domain architecture, Nudix hydrolase spans 6-149 (GFRPNVGIIL…KRDVYQLALT (144 aa)). The short motif at 38-59 (GGIKYGETPMQAMYRELHEETG) is the Nudix box element.

The protein belongs to the Nudix hydrolase family. RppH subfamily. The cofactor is a divalent metal cation.

Functionally, accelerates the degradation of transcripts by removing pyrophosphate from the 5'-end of triphosphorylated RNA, leading to a more labile monophosphorylated state that can stimulate subsequent ribonuclease cleavage. The chain is RNA pyrophosphohydrolase from Burkholderia orbicola (strain MC0-3).